The primary structure comprises 369 residues: Pyrimidine monooxygenase RutA (369 aa).

FMN contacts are provided by residues 49–50, Asn115, Glu124, 140–141, and Ser190; these read IK and RY.

The protein belongs to the NtaA/SnaA/DszA monooxygenase family. RutA subfamily.

The catalysed reaction is uracil + FMNH2 + NADH + O2 = (Z)-3-ureidoacrylate + FMN + NAD(+) + H2O + H(+). It carries out the reaction thymine + FMNH2 + NADH + O2 = (Z)-2-methylureidoacrylate + FMN + NAD(+) + H2O + H(+). In terms of biological role, catalyzes the pyrimidine ring opening between N-3 and C-4 by an unusual flavin hydroperoxide-catalyzed mechanism, adding oxygen atoms in the process to yield ureidoacrylate peracid, that immediately reacts with FMN forming ureidoacrylate and FMN-N(5)-oxide. The FMN-N(5)-oxide reacts spontaneously with NADH to produce FMN. Requires the flavin reductase RutF to regenerate FMN in vivo. The chain is Pyrimidine monooxygenase RutA from Acinetobacter baylyi (strain ATCC 33305 / BD413 / ADP1).